A 468-amino-acid chain; its full sequence is 3-isopropylmalate dehydratase large subunit (468 aa).

[4Fe-4S] cluster is bound by residues Cys347, Cys407, and Cys410.

The protein belongs to the aconitase/IPM isomerase family. LeuC type 1 subfamily. In terms of assembly, heterodimer of LeuC and LeuD. Requires [4Fe-4S] cluster as cofactor.

It catalyses the reaction (2R,3S)-3-isopropylmalate = (2S)-2-isopropylmalate. The protein operates within amino-acid biosynthesis; L-leucine biosynthesis; L-leucine from 3-methyl-2-oxobutanoate: step 2/4. Its function is as follows. Catalyzes the isomerization between 2-isopropylmalate and 3-isopropylmalate, via the formation of 2-isopropylmaleate. In Glaesserella parasuis serovar 5 (strain SH0165) (Haemophilus parasuis), this protein is 3-isopropylmalate dehydratase large subunit.